We begin with the raw amino-acid sequence, 340 residues long: MDTKAVGVSKDTAASMEASTVFPGFKFSPTDVELISYYLKRKMDGLERSVEVIPDLEIYNFEPWDLPDKSIVKSDSEWFFFCARGKKYPHGSQNRRATKMGYWKATGKERDVKSGSEVIGTKRTLVFHIGRAPKGERTDWIMHEYCVKGVSLDDAMVVCRVRRNKEYNSGTSQKAPKPNSSAEKHAKVQNGATSSGSPSDWDNLVDFYLAGESGEKLLAEMAESSENLQVDNDEDFFADILRDEIINLDEAVMTGNTPNEVPTLESASMEIRVLPLPNMIDKQMSSLLEERPSQKKKGKDATESLSSCFVGLYSIKSVNKARWDVIIGVVALIAMLFYLE.

The NAC domain maps to 21–164; that stretch reads VFPGFKFSPT…AMVVCRVRRN (144 aa). The DNA-binding element occupies 119–170; that stretch reads IGTKRTLVFHIGRAPKGERTDWIMHEYCVKGVSLDDAMVVCRVRRNKEYNSG. Positions 167–181 are enriched in polar residues; the sequence is YNSGTSQKAPKPNSS. Residues 167–198 form a disordered region; that stretch reads YNSGTSQKAPKPNSSAEKHAKVQNGATSSGSP.

As to quaternary structure, interacts with PAS1.

It localises to the cytoplasm. The protein localises to the nucleus. Its function is as follows. Transcription factor involved in plant cell division. This chain is NAC domain-containing protein 89 (NAC089), found in Arabidopsis thaliana (Mouse-ear cress).